A 236-amino-acid polypeptide reads, in one-letter code: Adenylate dimethylallyltransferase (236 aa).

It belongs to the isopentenyl transferase family.

The enzyme catalyses dimethylallyl diphosphate + AMP = N(6)-(dimethylallyl)adenosine 5'-phosphate + diphosphate. In terms of biological role, transfers dimethylallyl groups to AMP as part of the biosynthesis of cytokinin phytohormones. This is Adenylate dimethylallyltransferase (ipt) from Allorhizobium ampelinum (strain ATCC BAA-846 / DSM 112012 / S4) (Agrobacterium vitis (strain S4)).